The primary structure comprises 256 residues: Triosephosphate isomerase (256 aa).

9–11 (NWK) is a binding site for substrate. Residue histidine 95 is the Electrophile of the active site. Glutamate 167 functions as the Proton acceptor in the catalytic mechanism. Residues glycine 173, serine 213, and 234 to 235 (GG) each bind substrate.

The protein belongs to the triosephosphate isomerase family. As to quaternary structure, homodimer.

It localises to the cytoplasm. The catalysed reaction is D-glyceraldehyde 3-phosphate = dihydroxyacetone phosphate. The protein operates within carbohydrate biosynthesis; gluconeogenesis. Its pathway is carbohydrate degradation; glycolysis; D-glyceraldehyde 3-phosphate from glycerone phosphate: step 1/1. Its function is as follows. Involved in the gluconeogenesis. Catalyzes stereospecifically the conversion of dihydroxyacetone phosphate (DHAP) to D-glyceraldehyde-3-phosphate (G3P). This Symbiobacterium thermophilum (strain DSM 24528 / JCM 14929 / IAM 14863 / T) protein is Triosephosphate isomerase.